Here is a 756-residue protein sequence, read N- to C-terminus: Catalase-peroxidase (756 aa).

Positions 91–244 (WHSAGTYRTG…LAAVQMGLIY (154 aa)) form a cross-link, tryptophyl-tyrosyl-methioninium (Trp-Tyr) (with M-270). The Proton acceptor role is filled by histidine 92. The tract at residues 198 to 230 (AQKKMQQPGDGTLVAEPENHANEESRTASGERN) is disordered. Basic and acidic residues predominate over residues 214-223 (PENHANEESR). Positions 244-270 (YVNPEGPEGVPDPVASARDIRETFGRM) form a cross-link, tryptophyl-tyrosyl-methioninium (Tyr-Met) (with W-91). Residue histidine 285 coordinates heme b. A disordered region spans residues 371-390 (KNGAGAGKIPDAHDPSKRHA).

It belongs to the peroxidase family. Peroxidase/catalase subfamily. As to quaternary structure, homodimer or homotetramer. Requires heme b as cofactor. In terms of processing, formation of the three residue Trp-Tyr-Met cross-link is important for the catalase, but not the peroxidase activity of the enzyme.

The catalysed reaction is H2O2 + AH2 = A + 2 H2O. It carries out the reaction 2 H2O2 = O2 + 2 H2O. Functionally, bifunctional enzyme with both catalase and broad-spectrum peroxidase activity. This is Catalase-peroxidase from Pseudomonas syringae pv. tomato (strain ATCC BAA-871 / DC3000).